We begin with the raw amino-acid sequence, 230 residues long: Uracil-DNA glycosylase (230 aa).

The active-site Proton acceptor is the aspartate 70.

Belongs to the uracil-DNA glycosylase (UDG) superfamily. UNG family.

It is found in the cytoplasm. The enzyme catalyses Hydrolyzes single-stranded DNA or mismatched double-stranded DNA and polynucleotides, releasing free uracil.. Its function is as follows. Excises uracil residues from the DNA which can arise as a result of misincorporation of dUMP residues by DNA polymerase or due to deamination of cytosine. The protein is Uracil-DNA glycosylase of Pseudomonas syringae pv. tomato (strain ATCC BAA-871 / DC3000).